Reading from the N-terminus, the 509-residue chain is Cobyric acid synthase (509 aa).

Residues 262–459 (EIKVGIIKLP…IHGIFENDSW (198 aa)) enclose the GATase cobBQ-type domain. Cysteine 343 functions as the Nucleophile in the catalytic mechanism. Histidine 451 is an active-site residue.

It belongs to the CobB/CobQ family. CobQ subfamily.

It participates in cofactor biosynthesis; adenosylcobalamin biosynthesis. Catalyzes amidations at positions B, D, E, and G on adenosylcobyrinic A,C-diamide. NH(2) groups are provided by glutamine, and one molecule of ATP is hydrogenolyzed for each amidation. In Prochlorococcus marinus (strain MIT 9215), this protein is Cobyric acid synthase.